A 237-amino-acid chain; its full sequence is MTEQALLTDARLYLCTDARTDRGDFADFVDAAYAGGVDIIQLRDKGLEAAEELELLEVLETAARRHGRLWSVNDRADIASLSGAPVLHVGQKDLPLASARKFLGGEAVIGLSTHSHGQIDAAIAASRGAGGLDYFCVGPVWATPTKPGRAAVGLELVRYAAEAAGKTTAKTTGGAAGPTVDGPRLPWFAIGGIDLGNVEQVAAAGAERIVVVRAITEADDPAAAARSLLAALDAGAS.

4-amino-2-methyl-5-(diphosphooxymethyl)pyrimidine contacts are provided by residues 41–45 and Asn73; that span reads QLRDK. Residues Asp74 and Asp93 each contribute to the Mg(2+) site. Ser112 lines the 4-amino-2-methyl-5-(diphosphooxymethyl)pyrimidine pocket. 143 to 145 lines the 2-[(2R,5Z)-2-carboxy-4-methylthiazol-5(2H)-ylidene]ethyl phosphate pocket; the sequence is TPT. Lys146 provides a ligand contact to 4-amino-2-methyl-5-(diphosphooxymethyl)pyrimidine. Gly192 serves as a coordination point for 2-[(2R,5Z)-2-carboxy-4-methylthiazol-5(2H)-ylidene]ethyl phosphate.

This sequence belongs to the thiamine-phosphate synthase family. Mg(2+) is required as a cofactor.

The enzyme catalyses 2-[(2R,5Z)-2-carboxy-4-methylthiazol-5(2H)-ylidene]ethyl phosphate + 4-amino-2-methyl-5-(diphosphooxymethyl)pyrimidine + 2 H(+) = thiamine phosphate + CO2 + diphosphate. The catalysed reaction is 2-(2-carboxy-4-methylthiazol-5-yl)ethyl phosphate + 4-amino-2-methyl-5-(diphosphooxymethyl)pyrimidine + 2 H(+) = thiamine phosphate + CO2 + diphosphate. It catalyses the reaction 4-methyl-5-(2-phosphooxyethyl)-thiazole + 4-amino-2-methyl-5-(diphosphooxymethyl)pyrimidine + H(+) = thiamine phosphate + diphosphate. It participates in cofactor biosynthesis; thiamine diphosphate biosynthesis; thiamine phosphate from 4-amino-2-methyl-5-diphosphomethylpyrimidine and 4-methyl-5-(2-phosphoethyl)-thiazole: step 1/1. Functionally, condenses 4-methyl-5-(beta-hydroxyethyl)thiazole monophosphate (THZ-P) and 2-methyl-4-amino-5-hydroxymethyl pyrimidine pyrophosphate (HMP-PP) to form thiamine monophosphate (TMP). The sequence is that of Thiamine-phosphate synthase from Arthrobacter sp. (strain FB24).